The following is a 914-amino-acid chain: Eukaryotic translation initiation factor 3 subunit C-like protein (914 aa).

A disordered region spans residues 1 to 44 (MSRFFTTGSDSESESSLSGEELVTKPVGGNYGKQPLLLSEDEED). The segment covering 8–21 (GSDSESESSLSGEE) has biased composition (low complexity). A phosphoserine mark is found at Ser-9, Ser-11, Ser-13, Ser-15, Ser-16, Ser-18, and Ser-39. Lys-99 is subject to N6-acetyllysine. Disordered stretches follow at residues 157–302 (TSYK…GGEW) and 523–543 (QLTP…NEGE). 4 positions are modified to phosphoserine: Ser-166, Ser-178, Ser-181, and Ser-182. Acidic residues predominate over residues 166–190 (SADEDAEKNEEDSEGSSDEDEDEDG). Over residues 199–216 (KKSEAPSGESRKFLKKMD) the composition is skewed to basic and acidic residues. The segment covering 217–232 (DEDEDSEDSEDDEDWD) has biased composition (acidic residues). Residues 261–278 (PTTDEDKKAAEKKREDKA) show a composition bias toward basic and acidic residues. Residues 291–300 (EEEEEDNEGG) show a composition bias toward acidic residues. The span at 523–532 (QLTPPEGSSK) shows a compositional bias: polar residues. The residue at position 525 (Thr-525) is a Phosphothreonine. An N6-acetyllysine modification is found at Lys-644. A PCI domain is found at 674 to 850 (FHLHINLELL…QTVVMHRTEP (177 aa)). The tract at residues 886 to 914 (FRDQKDGYRKNEGYMRRGGYRQQQSQTAY) is disordered. Residues 887 to 900 (RDQKDGYRKNEGYM) are compositionally biased toward basic and acidic residues. At Ser-910 the chain carries Phosphoserine.

This sequence belongs to the eIF-3 subunit C family. As to quaternary structure, component of the eukaryotic translation initiation factor 3 (eIF-3) complex, which is composed of 13 subunits: EIF3A, EIF3B, EIF3C, EIF3D, EIF3E, EIF3F, EIF3G, EIF3H, EIF3I, EIF3J, EIF3K, EIF3L and EIF3M. The eIF-3 complex appears to include 3 stable modules: module A is composed of EIF3A, EIF3B, EIF3G and EIF3I; module B is composed of EIF3F, EIF3H, and EIF3M; and module C is composed of EIF3C, EIF3D, EIF3E, EIF3K and EIF3L. EIF3C of module C binds EIF3B of module A and EIF3H of module B, thereby linking the three modules. EIF3J is a labile subunit that binds to the eIF-3 complex via EIF3B. The eIF-3 complex interacts with RPS6KB1 under conditions of nutrient depletion. Mitogenic stimulation leads to binding and activation of a complex composed of MTOR and RPTOR, leading to phosphorylation and release of RPS6KB1 and binding of EIF4B to eIF-3. Phosphorylated. Phosphorylation is enhanced upon serum stimulation.

It localises to the cytoplasm. Component of the eukaryotic translation initiation factor 3 (eIF-3) complex, which is required for several steps in the initiation of protein synthesis. The eIF-3 complex associates with the 40S ribosome and facilitates the recruitment of eIF-1, eIF-1A, eIF-2:GTP:methionyl-tRNAi and eIF-5 to form the 43S pre-initiation complex (43S PIC). The eIF-3 complex stimulates mRNA recruitment to the 43S PIC and scanning of the mRNA for AUG recognition. The eIF-3 complex is also required for disassembly and recycling of post-termination ribosomal complexes and subsequently prevents premature joining of the 40S and 60S ribosomal subunits prior to initiation. The eIF-3 complex specifically targets and initiates translation of a subset of mRNAs involved in cell proliferation, including cell cycling, differentiation and apoptosis, and uses different modes of RNA stem-loop binding to exert either translational activation or repression. This Homo sapiens (Human) protein is Eukaryotic translation initiation factor 3 subunit C-like protein (EIF3CL).